The primary structure comprises 624 residues: Kelch-like ECH-associated protein 1 (624 aa).

Cys38 is subject to S-(2-succinyl)cysteine. The BTB domain maps to 77–149 (CDVTLQVKYE…AYTASISVGE (73 aa)). Residue Arg135 forms an N5-[4-(S-L-cysteinyl)-5-methyl-1H-imidazol-2-yl]-L-ornithine (Arg-Cys) (interchain with C-151 in KEAP1) linkage. An S-(2-succinyl)cysteine mark is found at Cys151 and Cys241. S-(2,3-dicarboxypropyl)cysteine; alternate is present on Cys151. Cys151 bears the S-nitrosocysteine; alternate mark. Cys151 participates in a covalent cross-link: N5-[4-(S-L-cysteinyl)-5-methyl-1H-imidazol-2-yl]-L-ornithine (Cys-Arg) (interchain with R-135 in KEAP1). A BACK domain is found at 184–286 (AIGIANFAEQ…TPRFLQTQLQ (103 aa)). S-(2,3-dicarboxypropyl)cysteine is present on residues Cys257 and Cys273. S-(2-succinyl)cysteine occurs at positions 288 and 319. Cys288 is modified (S-(2,3-dicarboxypropyl)cysteine; alternate). Kelch repeat units follow at residues 327–372 (LIYT…VVGG), 373–423 (LLYA…VIDG), 424–470 (HIYA…VLNR), 471–517 (LLYA…VLHS), 519–564 (IYAA…VHQG), and 565–611 (RIYV…VTME). Cys434 carries the S-cGMP-cysteine modification. Residue Cys613 is modified to S-(2-succinyl)cysteine.

This sequence belongs to the KEAP1 family. Component of the BCR(KEAP1) E3 ubiquitin ligase complex, at least composed of 2 molecules of CUL3, 2 molecules of KEAP1, and RBX1. Interacts with NFE2L2/NRF2; the interaction is direct. Forms a ternary complex with NFE2L2/NRF2 and PGAM5. Interacts with (phosphorylated) SQSTM1/p62; the interaction is direct and inactivates the BCR(KEAP1) complex by sequestering it in inclusion bodies, promoting its degradation. Interacts with NFE2L1. Interacts with BPTF and PTMA. Interacts with MAP1LC3B. Interacts indirectly with ENC1. Interacts with SESN1 and SESN2. Interacts with HSP90AA1 and HSP90AB1. Interacts with PGCKA1; this interaction prevents the ubiquitination of KEAP1 by TRIM25, thus protecting KEAP1 from degradation. In terms of processing, non-enzymatic covalent modifications of reactive cysteines by electrophile metabolites inactivate the BCR(KEAP1) complex. Accumulation of fumarate promotes the formation of cysteine S-succination (S-(2-succinyl)cysteine), leading to inactivate the BCR(KEAP1) complex and promote NFE2L2/NRF2 nuclear accumulation and activation. Nitric oxide-dependent 8-Nitro-cGMP formation promotes cysteine guanylation (S-cGMP-cysteine), leading to NFE2L2/NRF2 nuclear accumulation and activation. Itaconate, an anti-inflammatory metabolite generated in response to lipopolysaccharide, alkylates cysteines, activating NFE2L2/NRF2. Methylglyoxal, a reactive metabolite that accumulates when the glycolytic enzyme PGK1 is inhibited, promotes formation of a methylimidazole cross-link between proximal Cys-151 and Arg-135 on another KEAP1 molecule, resulting in an inactive dimer that inactivates the BCR(KEAP1) complex. Degraded via a proteasomal-independent process during selective autophagy: interaction with phosphorylated SQSTM1/p62 sequesters KEAP1 in inclusion bodies, leading to its degradation. Post-translationally, auto-ubiquitinated by the BCR(KEAP1) complex. Quinone-induced oxidative stress, but not sulforaphane, increases its ubiquitination. Ubiquitination and subsequent degradation is most pronounced following prolonged exposure of cells to oxidative stress, particularly in glutathione-deficient cells that are highly susceptible to oxidative stress. Deubiquitinated by USP25; leading to stabilization. Ubiquitinated by TRIM25; leading to degradation upon ER stress.

It localises to the cytoplasm. The protein localises to the nucleus. It participates in protein modification; protein ubiquitination. With respect to regulation, ubiquitin ligase activity of the BCR(KEAP1) complex is inhibited by oxidative stress and electrophile metabolites such as sulforaphane. Electrophile metabolites react with reactive cysteine residues in KEAP1 and trigger non-enzymatic covalent modifications of these cysteine residues, leading to inactivate the ubiquitin ligase activity of the BCR(KEAP1) complex. Selective autophagy also inactivates the BCR(KEAP1) complex via interaction between KEAP1 and SQSTM1/p62, which sequesters the complex in inclusion bodies and promotes its degradation. Functionally, substrate-specific adapter of a BCR (BTB-CUL3-RBX1) E3 ubiquitin ligase complex that regulates the response to oxidative stress by targeting NFE2L2/NRF2 for ubiquitination. KEAP1 acts as a key sensor of oxidative and electrophilic stress: in normal conditions, the BCR(KEAP1) complex mediates ubiquitination and degradation of NFE2L2/NRF2, a transcription factor regulating expression of many cytoprotective genes. In response to oxidative stress, different electrophile metabolites trigger non-enzymatic covalent modifications of highly reactive cysteine residues in KEAP1, leading to inactivate the ubiquitin ligase activity of the BCR(KEAP1) complex, promoting NFE2L2/NRF2 nuclear accumulation and expression of phase II detoxifying enzymes. In response to selective autophagy, KEAP1 is sequestered in inclusion bodies following its interaction with SQSTM1/p62, leading to inactivation of the BCR(KEAP1) complex and activation of NFE2L2/NRF2. The BCR(KEAP1) complex also mediates ubiquitination of SQSTM1/p62, increasing SQSTM1/p62 sequestering activity and degradation. The BCR(KEAP1) complex also targets BPTF and PGAM5 for ubiquitination and degradation by the proteasome. The chain is Kelch-like ECH-associated protein 1 from Rattus norvegicus (Rat).